Here is a 1368-residue protein sequence, read N- to C-terminus: DNA-directed RNA polymerase subunit beta (1368 aa).

The protein belongs to the RNA polymerase beta chain family. In terms of assembly, the RNAP catalytic core consists of 2 alpha, 1 beta, 1 beta' and 1 omega subunit. When a sigma factor is associated with the core the holoenzyme is formed, which can initiate transcription.

The enzyme catalyses RNA(n) + a ribonucleoside 5'-triphosphate = RNA(n+1) + diphosphate. Its function is as follows. DNA-dependent RNA polymerase catalyzes the transcription of DNA into RNA using the four ribonucleoside triphosphates as substrates. The polypeptide is DNA-directed RNA polymerase subunit beta (Cupriavidus metallidurans (strain ATCC 43123 / DSM 2839 / NBRC 102507 / CH34) (Ralstonia metallidurans)).